A 362-amino-acid chain; its full sequence is Transcription factor Sox-7 (362 aa).

A disordered region spans residues 19–41 (MDGDLSDGLSPHRSPREKGSETR). Residues 32-41 (SPREKGSETR) are compositionally biased toward basic and acidic residues. A DNA-binding region (HMG box) is located at residues 42–110 (IRRPMNAFMV…QHMQDYPNYK (69 aa)). A Sox C-terminal domain is found at 246 to 362 (QPGSSMIPPV…ATYYNSYSVS (117 aa)).

As to expression, localized to the vegetal hemisphere of blastula embryos. Tissue-specific expression in early neurula (stage 13-14) embryos begins in the ciliate cells of the epidermis. Starting about stage 24, expression is found in a lateral stripe on each side of the embryo, with expression extending more posteriorly as development proceeds. Expressed in embryonic vasculature, as well as in the procardia tube, endocardium, notochord and hindbrain. As development proceeds, strong expression is seen in the hindbrain, posterior cardinal veins, aortic arch, stomodeal depression, epithelium and intersomitic arteries of stage 33/34 larvae. Expressed in posterior rhombomeres. By stage 40 larvae, expression in most of the vascular endothelia disappears, in particular in the posterior cardinal vein, but expression continues in the hindbrain. Expressed in a wide range of adult tissues, including ovary, testis, kidney, bladder, duodenum and liver.

It is found in the nucleus. Functionally, transcription factor. Binds to the DNA sequence 5'-AACAAT-3'. Acts downstream of vegt and upstream of nodal signaling to promote endodermal and mesodermal differentiation by promoting vegt-induced expression of both endodermal genes (including endodermin) and mesodermal genes (including snai1/snail and snai2/slug). Induces expression of multiple nodal genes (including nodal, nodal2, nodal4, nodal5 and nodal6) and binds directly to sites within the promoter of the nodal5 gene. The endodermal and mesodermal specification pathways then interact to initiate cardiogenesis. Acts partially redundantly with sox18 during cardiogenesis. Also acts as an antagonist of beta-catenin signaling. Regulates (possibly indirectly) development of the pronephros, the functional larval kidney. This chain is Transcription factor Sox-7 (sox7), found in Xenopus laevis (African clawed frog).